The primary structure comprises 77 residues: U8-lycotoxin-Ls1g (77 aa).

A signal peptide spans 1-20 (MKLIIFTGLVLFAIVSLIEV). A propeptide spanning residues 21–26 (QADNER) is cleaved from the precursor.

The protein belongs to the neurotoxin 19 (CSTX) family. 08 (U8-Lctx) subfamily. Post-translationally, contains 4 disulfide bonds. Expressed by the venom gland.

Its subcellular location is the secreted. In Lycosa singoriensis (Wolf spider), this protein is U8-lycotoxin-Ls1g.